Reading from the N-terminus, the 206-residue chain is MIPAKPFLCVITDEQCSSPVDLALMALEGGAEMIQLRHKSASGKQLFQWALDIQRLCRIHHAQFIVNDRVDIALAMNADGVHLGQQDLQPGEARKLLGTDKIIGVSTSSLTEALNAERAGADYIGFGHIFQTGSKNKLSAPLGSAAISAVVQRISIPLVAIGGINKMNMMETIAAGASGIAMIAAISRTADPEGATRAITELLKGH.

Residues 35 to 39 and N67 contribute to the 4-amino-2-methyl-5-(diphosphooxymethyl)pyrimidine site; that span reads QLRHK. Mg(2+) contacts are provided by D68 and D87. S106 is a binding site for 4-amino-2-methyl-5-(diphosphooxymethyl)pyrimidine. 132–134 contributes to the 2-[(2R,5Z)-2-carboxy-4-methylthiazol-5(2H)-ylidene]ethyl phosphate binding site; that stretch reads TGS. K135 provides a ligand contact to 4-amino-2-methyl-5-(diphosphooxymethyl)pyrimidine. Residue G163 participates in 2-[(2R,5Z)-2-carboxy-4-methylthiazol-5(2H)-ylidene]ethyl phosphate binding.

The protein belongs to the thiamine-phosphate synthase family. Requires Mg(2+) as cofactor.

The catalysed reaction is 2-[(2R,5Z)-2-carboxy-4-methylthiazol-5(2H)-ylidene]ethyl phosphate + 4-amino-2-methyl-5-(diphosphooxymethyl)pyrimidine + 2 H(+) = thiamine phosphate + CO2 + diphosphate. It carries out the reaction 2-(2-carboxy-4-methylthiazol-5-yl)ethyl phosphate + 4-amino-2-methyl-5-(diphosphooxymethyl)pyrimidine + 2 H(+) = thiamine phosphate + CO2 + diphosphate. It catalyses the reaction 4-methyl-5-(2-phosphooxyethyl)-thiazole + 4-amino-2-methyl-5-(diphosphooxymethyl)pyrimidine + H(+) = thiamine phosphate + diphosphate. It functions in the pathway cofactor biosynthesis; thiamine diphosphate biosynthesis; thiamine phosphate from 4-amino-2-methyl-5-diphosphomethylpyrimidine and 4-methyl-5-(2-phosphoethyl)-thiazole: step 1/1. Its function is as follows. Condenses 4-methyl-5-(beta-hydroxyethyl)thiazole monophosphate (THZ-P) and 2-methyl-4-amino-5-hydroxymethyl pyrimidine pyrophosphate (HMP-PP) to form thiamine monophosphate (TMP). The chain is Thiamine-phosphate synthase from Chlorobium phaeobacteroides (strain DSM 266 / SMG 266 / 2430).